The chain runs to 657 residues: Pyoverdine export ATP-binding/permease protein PvdT (657 aa).

In terms of domain architecture, ABC transporter spans Ile6–Ala245. An ATP-binding site is contributed by Gly43 to Ser50. A run of 4 helical transmembrane segments spans residues Ala285–Gly305, Ile539–Val559, Leu590–Leu610, and Leu620–Met640.

This sequence belongs to the ABC transporter superfamily. Macrolide exporter (TC 3.A.1.122) family. Part of the tripartite efflux system PvdRT-OpmQ, which is composed of an inner membrane component with both ATPase and permease domains, PvdT, a periplasmic membrane fusion protein, PvdR, and an outer membrane component, OpmQ.

Its subcellular location is the cell inner membrane. Functionally, part of the tripartite efflux system PvdRT-OpmQ required for the secretion into the extracellular milieu of the siderophore pyoverdine (PVD), which is involved in iron acquisition. This subunit binds PVD and drives its secretion by hydrolyzing ATP. The system is responsible for export of newly synthesized PVD after the final steps of biosynthesis have taken place in the periplasm. It is also responsible for recycling of PVD after internalization of ferri-PVD into the periplasm by the outer-membrane receptor FpvA and release of iron from PVD, thus making PVD available for new cycles of iron uptake. This Pseudomonas syringae pv. syringae (strain B728a) protein is Pyoverdine export ATP-binding/permease protein PvdT.